The chain runs to 590 residues: Multidrug and toxin extrusion protein 1 (590 aa).

The Cytoplasmic segment spans residues 1-59 (MDSITSYNVTQMNGDTKQEKCDDVLSTSSTQKFCGGCRKKLRSLLPVNYKTEIVELLKL). Residues 60–80 (AGPVFISQLMIFLISFVSTVF) traverse the membrane as a helical segment. The Extracellular portion of the chain corresponds to 81–88 (CGHLGKTE). The chain crosses the membrane as a helical span at residues 89–109 (LAGVALAIAVINVTGISIGSG). Over 110–137 (LASACDTLISQTFGSNNLKRVGVILQRG) the chain is Cytoplasmic. Residues 138-158 (ILILLLACFPCWALLINTEPI) form a helical membrane-spanning segment. Topologically, residues 159–167 (LLAVRQSPN) are extracellular. Residues 168-188 (VASLSQLYVKIFMPALPAAFM) form a helical membrane-spanning segment. Over 189 to 199 (YQLQGRYLQNQ) the chain is Cytoplasmic. The helical transmembrane segment at 200–222 (GIIWPQVITGAAGNILNALINYV) threads the bilayer. Residues 223 to 231 (FLHLLELGV) are Extracellular-facing. The helical transmembrane segment at 232 to 254 (AGSAAANTISQYSLAVFLYVYIR) threads the bilayer. Residues 255-274 (WKNLHKATWDGWSRDCLQEW) lie on the Cytoplasmic side of the membrane. Residues 275 to 294 (GAFIRLALPSMLMLCVEWWT) traverse the membrane as a helical segment. The Extracellular segment spans residues 295–313 (YEIGGFLAGLISETELGAQ). The helical transmembrane segment at 314-334 (SVVYELATIAYMFPLGFAVAA) threads the bilayer. Topologically, residues 335-351 (SVRVGNALGAGNTERAK) are cytoplasmic. A helical membrane pass occupies residues 352–372 (LSAKVALVCGVLVSCVVATLI). The Extracellular portion of the chain corresponds to 373 to 395 (GCTKDVIAYIFTTEEEIVSRVSQ). Residues 396–416 (VMIMYGFFHLFDAIAGITGGI) form a helical membrane-spanning segment. At 417–430 (VRGAGKQLLGALCN) the chain is on the cytoplasmic side. A helical membrane pass occupies residues 431–451 (IVGYYFVGFPTGVSLMFALSM). Residue glycine 452 is a topological domain, extracellular. Residues 453 to 473 (IIGLWIGFFGCVFLQSLFFII) traverse the membrane as a helical segment. At 474–565 (LIYKLDWKKA…TTKQLIVRRG (92 aa)) the chain is on the cytoplasmic side. A helical transmembrane segment spans residues 566–586 (LAVLLMVLILAGGIVLNEMLV). The Extracellular portion of the chain corresponds to 587 to 590 (RYLR).

The protein belongs to the multi antimicrobial extrusion (MATE) (TC 2.A.66.1) family.

The protein resides in the cell membrane. Solute transporter for tetraethylammonium (TEA), cimetidine, metformin, guanidine, N-methylnicotinamide (NMN) and also the zwitterionic cephalosporin cephalexin. Responsible for the secretion of cationic drugs across the brush border membranes. The chain is Multidrug and toxin extrusion protein 1 (slc47a1) from Danio rerio (Zebrafish).